Reading from the N-terminus, the 677-residue chain is Methionine--tRNA ligase (677 aa).

A 'HIGH' region motif is present at residues 15-25; sequence PYANGSIHLGH. The Zn(2+) site is built by Cys-146, Cys-149, Cys-159, and Cys-162. Positions 333–337 match the 'KMSKS' region motif; it reads KMSKS. Position 336 (Lys-336) interacts with ATP. The region spanning 575–677 is the tRNA-binding domain; it reads DFAKVDLRVA…AGAKPGHQVK (103 aa).

This sequence belongs to the class-I aminoacyl-tRNA synthetase family. MetG type 1 subfamily. Homodimer. Zn(2+) is required as a cofactor.

The protein localises to the cytoplasm. It catalyses the reaction tRNA(Met) + L-methionine + ATP = L-methionyl-tRNA(Met) + AMP + diphosphate. Is required not only for elongation of protein synthesis but also for the initiation of all mRNA translation through initiator tRNA(fMet) aminoacylation. The polypeptide is Methionine--tRNA ligase (metG) (Escherichia coli (strain K12)).